The primary structure comprises 80 residues: 17 kDa surface antigen (80 aa).

Over residues 47 to 58 (ALETTPSGTSIE) the composition is skewed to polar residues. Residues 47–80 (ALETTPSGTSIEWRNPDNGNYGYVTPSKTYKNST) form a disordered region.

The protein belongs to the rickettsiale 17 kDa surface antigen family.

It is found in the cell outer membrane. In Rickettsia canadensis, this protein is 17 kDa surface antigen (omp).